Consider the following 160-residue polypeptide: SsrA-binding protein (160 aa).

It belongs to the SmpB family.

Its subcellular location is the cytoplasm. Functionally, required for rescue of stalled ribosomes mediated by trans-translation. Binds to transfer-messenger RNA (tmRNA), required for stable association of tmRNA with ribosomes. tmRNA and SmpB together mimic tRNA shape, replacing the anticodon stem-loop with SmpB. tmRNA is encoded by the ssrA gene; the 2 termini fold to resemble tRNA(Ala) and it encodes a 'tag peptide', a short internal open reading frame. During trans-translation Ala-aminoacylated tmRNA acts like a tRNA, entering the A-site of stalled ribosomes, displacing the stalled mRNA. The ribosome then switches to translate the ORF on the tmRNA; the nascent peptide is terminated with the 'tag peptide' encoded by the tmRNA and targeted for degradation. The ribosome is freed to recommence translation, which seems to be the essential function of trans-translation. The chain is SsrA-binding protein from Actinobacillus succinogenes (strain ATCC 55618 / DSM 22257 / CCUG 43843 / 130Z).